The primary structure comprises 591 residues: Paralemmin-3 (591 aa).

4 repeats span residues 171–174 (EKNK), 183–186 (EKNQ), 224–227 (EKNQ), and 234–237 (KNQD). Positions 282–293 (DQTQSTSDQNME) are enriched in polar residues. Disordered stretches follow at residues 282-317 (DQTQ…TKDQ), 332-413 (KGTT…QNQD), and 515-591 (PDLK…CVVM). Composition is skewed to basic and acidic residues over residues 306–317 (SQSEGKIQTKDQ) and 349–383 (EPKE…DMDP). Composition is skewed to polar residues over residues 385–413 (QLST…QNQD) and 528–542 (QESS…TIAQ). The span at 543-554 (SSSAEGNSSPES) shows a compositional bias: low complexity. Polar residues predominate over residues 559–575 (QKSQGTDSQQGGNTATQ). Residues 579–583 (RRKKK) carry the Nuclear localization signal motif. S-palmitoyl cysteine attachment occurs at residues Cys585 and Cys587. Cys588 carries the cysteine methyl ester modification. Residue Cys588 is the site of S-farnesyl cysteine attachment. A propeptide spans 589–591 (VVM) (removed in mature form).

The protein belongs to the paralemmin family. In terms of processing, may be phosphorylated during oocyte maturation. Post-translationally, palmitoylated on Cys-585 and Cys-587 and prenylated on Cys-588; which is required for membrane association. In terms of tissue distribution, in Xenopus oocyte, in the central nervous system cells of tadpoles and adult frogs, and transiently in epithelial cells of stomach and gut of tadpoles. Highly expressed in kidney.

It localises to the cytoplasm. The protein localises to the nucleus. It is found in the cell membrane. Its function is as follows. Maternal ATP-binding protein that may have multiple functions during development, one of which may be associated with the development and maintenance of the central nervous system. In Xenopus laevis (African clawed frog), this protein is Paralemmin-3 (palm3).